A 714-amino-acid polypeptide reads, in one-letter code: MFDVTTKSMQWGEETLTLESGKIARQADGSVVATLGETRVMANVTFAREQKPGQDFFPLTVHYQEKYYAAGKVPGGFFKREARPTEKETLTARLIDRPIRPLFVPGFKNEVLVMCTVLSHDLVNDPDIVAMIAASAALTISGVPFMGPIAGCRVGYVDGEYVLNPTVDDMQDLRLNPEQRLDLVVAGTKDAVMMVESEAYELTEAEMLGAVTFAHAQIQPVVDLIVSFAEQCAKEPFDFTPPDYSDLYAAVKAAGEEQMRAAFAITDKQERTAAVAAAREAIKAALTEEQLADGNLGSALKKLEAGILRGDVVKGGKRIDGRDTTTVRPIVAETGLLPRTHGSALFTRGETQGLVVTTLGTGDDEQFIDALHGNFKSNFLLHYNFPPYSVGEVGRVGSPGRREIGHGKLAWRALQAVLPAPTDFPYTIRVVSEITESNGSSSMASVCGGSLSMMDAGVPLKSAVAGVAMGLILEDDGSYAVLTDILGDEDHLGDMDFKVAGTENGITSLQMDIKVAGITPEIMEKALSQAKDGRMHILAEMNKALSGAADFSVHAPRIETMQIPTDKIREVIGSGGKVIREIVEVSGAKVDINDDGIIKIASPNGDSIKKAYDMIWSIVAEPEEGQVYTGKVVKIVDFGAFVNFFGKRDGLVHVSQIENRRLNHPSDVLKEGQEVKVKLLGFDDRGKVRLSMKVVDQETGEEIVPEKKEASEAE.

Mg(2+)-binding residues include Asp-490 and Asp-496. Positions 556–615 (PRIETMQIPTDKIREVIGSGGKVIREIVEVSGAKVDINDDGIIKIASPNGDSIKKAYDMI) constitute a KH domain. The 69-residue stretch at 625-693 (GQVYTGKVVK…DRGKVRLSMK (69 aa)) folds into the S1 motif domain.

This sequence belongs to the polyribonucleotide nucleotidyltransferase family. The cofactor is Mg(2+).

It localises to the cytoplasm. The catalysed reaction is RNA(n+1) + phosphate = RNA(n) + a ribonucleoside 5'-diphosphate. Involved in mRNA degradation. Catalyzes the phosphorolysis of single-stranded polyribonucleotides processively in the 3'- to 5'-direction. In Ruegeria pomeroyi (strain ATCC 700808 / DSM 15171 / DSS-3) (Silicibacter pomeroyi), this protein is Polyribonucleotide nucleotidyltransferase.